The sequence spans 388 residues: Queuine tRNA-ribosyltransferase (388 aa).

D90 (proton acceptor) is an active-site residue. Substrate contacts are provided by residues D90–F94, D144, Q205, and G232. The tract at residues G263–D269 is RNA binding. D282 (nucleophile) is an active-site residue. The tract at residues T287–R291 is RNA binding; important for wobble base 34 recognition. 4 residues coordinate Zn(2+): C320, C322, C325, and H351.

This sequence belongs to the queuine tRNA-ribosyltransferase family. As to quaternary structure, homodimer. Within each dimer, one monomer is responsible for RNA recognition and catalysis, while the other monomer binds to the replacement base PreQ1. Zn(2+) is required as a cofactor.

It catalyses the reaction 7-aminomethyl-7-carbaguanine + guanosine(34) in tRNA = 7-aminomethyl-7-carbaguanosine(34) in tRNA + guanine. Its pathway is tRNA modification; tRNA-queuosine biosynthesis. Its function is as follows. Catalyzes the base-exchange of a guanine (G) residue with the queuine precursor 7-aminomethyl-7-deazaguanine (PreQ1) at position 34 (anticodon wobble position) in tRNAs with GU(N) anticodons (tRNA-Asp, -Asn, -His and -Tyr). Catalysis occurs through a double-displacement mechanism. The nucleophile active site attacks the C1' of nucleotide 34 to detach the guanine base from the RNA, forming a covalent enzyme-RNA intermediate. The proton acceptor active site deprotonates the incoming PreQ1, allowing a nucleophilic attack on the C1' of the ribose to form the product. After dissociation, two additional enzymatic reactions on the tRNA convert PreQ1 to queuine (Q), resulting in the hypermodified nucleoside queuosine (7-(((4,5-cis-dihydroxy-2-cyclopenten-1-yl)amino)methyl)-7-deazaguanosine). This is Queuine tRNA-ribosyltransferase from Campylobacter curvus (strain 525.92).